Consider the following 189-residue polypeptide: MAQLYYKYGTMNSGKTIEILKVAHNYEEQGKPVVIMTSALDTRDGFGIVSSRIGMRREAIPISNDMDIFTFIAQLEEKPYCVLIDESQFLSKQNVYDLARVVDELNVPVMAFGLKNDFQNNLFEGSKHLLLLADKIDEIKTICQYCSKKATMVLRTENGKPVYEGDQIQIGGNETYIPVCRKHYFNPDI.

ATP is bound by residues 9–16 (GTMNSGKT) and 85–88 (DESQ). The active-site Proton acceptor is the E86. The Zn(2+) site is built by C143, C146, C180, and H183.

This sequence belongs to the thymidine kinase family. As to quaternary structure, homotetramer.

The protein localises to the cytoplasm. It carries out the reaction thymidine + ATP = dTMP + ADP + H(+). This is Thymidine kinase from Streptococcus pyogenes serotype M1.